A 321-amino-acid polypeptide reads, in one-letter code: MTKQVGKKFAWVIKNFSSLQCKKFYSVPFQIGDCKWRLSIYPKGNNCDYLSLFLEVADFKSLPSGWRRYVKLRLYIVKQLSTLIRKTHRWFDQEMWGWGFLYMLPLTKLHDEKEGFLVNGELMIVAEVDALGFIDPLNESEESEDPTQPLKKIKLNDDGAVSSDLLEEASPRKESMEVNGFQVLPSQVESVRLIFERHPDIASEFRAKNQYLRKACMDFLLSLVETLCQSLQEFSNEDLVEADIALTYLKDAGFKVDWLEKKLDQVRDKKEKERSCLAKLQETEETLLKLKQKCTELDALMDTEKAELSAIRTPLSFEDVV.

An MATH domain is found at 6–128; it reads GKKFAWVIKN…NGELMIVAEV (123 aa). Positions 255–310 form a coiled coil; it reads KVDWLEKKLDQVRDKKEKERSCLAKLQETEETLLKLKQKCTELDALMDTEKAELSA.

In Arabidopsis thaliana (Mouse-ear cress), this protein is MATH domain and coiled-coil domain-containing protein At3g58410.